The sequence spans 121 residues: Ribosome-binding factor A (121 aa).

This sequence belongs to the RbfA family. Monomer. Binds 30S ribosomal subunits, but not 50S ribosomal subunits or 70S ribosomes.

The protein resides in the cytoplasm. In terms of biological role, one of several proteins that assist in the late maturation steps of the functional core of the 30S ribosomal subunit. Associates with free 30S ribosomal subunits (but not with 30S subunits that are part of 70S ribosomes or polysomes). Required for efficient processing of 16S rRNA. May interact with the 5'-terminal helix region of 16S rRNA. This chain is Ribosome-binding factor A, found in Heliobacterium modesticaldum (strain ATCC 51547 / Ice1).